A 1006-amino-acid polypeptide reads, in one-letter code: E3 ubiquitin-protein ligase MIB1 (1006 aa).

Residues 6–74 (NNRVMVEGVG…AYDLRILDSA (69 aa)) enclose the MIB/HERC2 1 domain. The ZZ-type zinc finger occupies 80-132 (HDGTMCDTCRQQPIIGIRWKCAECTNYDLCTVCYHGDKHHLRHRFYRITTPGS). Cysteine 85, cysteine 88, cysteine 100, cysteine 103, cysteine 109, cysteine 112, histidine 118, and histidine 122 together coordinate Zn(2+). Positions 143 to 221 (SKKITARGIF…MSDLKCVQDA (79 aa)) constitute an MIB/HERC2 2 domain. Serine 408 carries the post-translational modification Phosphoserine. ANK repeat units follow at residues 430 to 460 (DLNE…DVNG), 463 to 492 (AGHT…DVEA), 496 to 525 (DGDR…DLNA), 529 to 558 (RRQT…HPSL), 562 to 591 (EGDT…DVTI), 595 to 627 (NGFN…IVDE), 631 to 661 (DGYT…NLDI), 665 to 694 (NQQT…KLDI), and 698 to 729 (DGDT…KVDA). 2 consecutive RING-type zinc fingers follow at residues 819–854 (CMVC…LICK) and 866–901 (CVVC…VQCR). Residues 935-962 (QKDKDNTNVNADVQKLQQQLQDIKEQTM) adopt a coiled-coil conformation. The RING-type 3 zinc finger occupies 963–996 (CPVCLDRLKNMIFLCGHGTCQLCGDRMSECPICR).

In terms of assembly, interacts with CEP131 and PCM1. In terms of processing, ubiquitinated; this modification is inhibited in response to cellular stress, such as ultraviolet light (UV) radiation or heat shock. Ubiquitinated; possibly via autoubiquitination. Detected in all tissues tested. Present in embryo, embryonic stem cells, bladder, skeletal muscle, bladder, uterus, testis, stomach, colon, ileum, trachea, lung, aorta, kidney, spleen, liver and vas deferens (at protein level). Highly expressed in testis.

It localises to the cytoplasm. The protein resides in the cytoskeleton. The protein localises to the microtubule organizing center. It is found in the centrosome. Its subcellular location is the centriolar satellite. It localises to the cell membrane. It catalyses the reaction S-ubiquitinyl-[E2 ubiquitin-conjugating enzyme]-L-cysteine + [acceptor protein]-L-lysine = [E2 ubiquitin-conjugating enzyme]-L-cysteine + N(6)-ubiquitinyl-[acceptor protein]-L-lysine.. The protein operates within protein modification; protein ubiquitination. E3 ubiquitin-protein ligase that mediates ubiquitination of Delta receptors, which act as ligands of Notch proteins. Positively regulates the Delta-mediated Notch signaling by ubiquitinating the intracellular domain of Delta, leading to endocytosis of Delta receptors. Involved in ubiquitination of centriolar satellite CEP131, CEP290 and PCM1 proteins and hence inhibits primary cilium formation in proliferating cells. Mediates 'Lys-63'-linked polyubiquitination of TBK1, which probably participates in kinase activation. Probably mediates ubiquitination and subsequent proteasomal degradation of DAPK1, thereby antagonizing anti-apoptotic effects of DAPK1 to promote TNF-induced apoptosis. In Mus musculus (Mouse), this protein is E3 ubiquitin-protein ligase MIB1 (Mib1).